The chain runs to 143 residues: Small ribosomal subunit protein uS9A (143 aa).

Serine 2 is subject to N-acetylserine. A Glycyl lysine isopeptide (Lys-Gly) (interchain with G-Cter in ubiquitin) cross-link involves residue lysine 30. Phosphoserine is present on serine 34. Glycyl lysine isopeptide (Lys-Gly) (interchain with G-Cter in ubiquitin) cross-links involve residues lysine 47 and lysine 59. Residue serine 61 is modified to Phosphoserine. Threonine 70 carries the phosphothreonine modification. Serine 76 is subject to Phosphoserine. A disordered region spans residues 123–143 (RPEPKKFGGKGARSRFQKSYR). A compositionally biased stretch (basic residues) spans 134-143 (ARSRFQKSYR).

This sequence belongs to the universal ribosomal protein uS9 family. As to quaternary structure, component of the small ribosomal subunit (SSU). Mature yeast ribosomes consist of a small (40S) and a large (60S) subunit. The 40S small subunit contains 1 molecule of ribosomal RNA (18S rRNA) and 33 different proteins (encoded by 57 genes). The large 60S subunit contains 3 rRNA molecules (25S, 5.8S and 5S rRNA) and 46 different proteins (encoded by 81 genes).

The protein resides in the cytoplasm. Functionally, component of the ribosome, a large ribonucleoprotein complex responsible for the synthesis of proteins in the cell. The small ribosomal subunit (SSU) binds messenger RNAs (mRNAs) and translates the encoded message by selecting cognate aminoacyl-transfer RNA (tRNA) molecules. The large subunit (LSU) contains the ribosomal catalytic site termed the peptidyl transferase center (PTC), which catalyzes the formation of peptide bonds, thereby polymerizing the amino acids delivered by tRNAs into a polypeptide chain. The nascent polypeptides leave the ribosome through a tunnel in the LSU and interact with protein factors that function in enzymatic processing, targeting, and the membrane insertion of nascent chains at the exit of the ribosomal tunnel. The protein is Small ribosomal subunit protein uS9A of Saccharomyces cerevisiae (strain ATCC 204508 / S288c) (Baker's yeast).